Reading from the N-terminus, the 338-residue chain is Large ribosomal subunit protein uL10 (338 aa).

A compositionally biased stretch (basic and acidic residues) spans 309 to 327 (KAEVEEAKEEEKEEKKEEA). The disordered stretch occupies residues 309 to 338 (KAEVEEAKEEEKEEKKEEAAPAAAGLGLLF).

Belongs to the universal ribosomal protein uL10 family. Part of the 50S ribosomal subunit. Forms part of the ribosomal stalk which helps the ribosome interact with GTP-bound translation factors. Forms a heptameric L10(L12)2(L12)2(L12)2 complex, where L10 forms an elongated spine to which the L12 dimers bind in a sequential fashion.

Forms part of the ribosomal stalk, playing a central role in the interaction of the ribosome with GTP-bound translation factors. The sequence is that of Large ribosomal subunit protein uL10 from Methanothermococcus thermolithotrophicus (Methanococcus thermolithotrophicus).